The sequence spans 368 residues: Galactoside 2-alpha-L-fucosyltransferase SEC1 (368 aa).

The tract at residues M1–G20 is disordered. At M1 to R31 the chain is on the cytoplasmic side. Residues F32 to S52 form a helical membrane-spanning segment. Residues T53–P368 are Lumenal-facing.

This sequence belongs to the glycosyltransferase 11 family. In terms of tissue distribution, kidney.

Its subcellular location is the golgi apparatus. The protein resides in the golgi stack membrane. The enzyme catalyses a ganglioside GM1 + GDP-beta-L-fucose = a ganglioside Fuc-GM1 + GDP + H(+). It functions in the pathway protein modification; protein glycosylation. Functionally, catalyzes the transfer of alpha 1,2-linked fucose to ganglioside GM1 and galacto-N-biose. The sequence is that of Galactoside 2-alpha-L-fucosyltransferase SEC1 from Bos taurus (Bovine).